A 369-amino-acid polypeptide reads, in one-letter code: Cytoplasmic tRNA 2-thiolation protein 1 (369 aa).

Belongs to the TtcA family. CTU1/NCS6/ATPBD3 subfamily.

Its subcellular location is the cytoplasm. It functions in the pathway tRNA modification; 5-methoxycarbonylmethyl-2-thiouridine-tRNA biosynthesis. In terms of biological role, plays a central role in 2-thiolation of mcm(5)S(2)U at tRNA wobble positions of tRNA(Lys), tRNA(Glu) and tRNA(Gln). Directly binds tRNAs and probably acts by catalyzing adenylation of tRNAs, an intermediate required for 2-thiolation. It is unclear whether it acts as a sulfurtransferase that transfers sulfur from thiocarboxylated URM1 onto the uridine of tRNAs at wobble position. Prior mcm(5) tRNA modification by the elongator complex is required for 2-thiolation. May also be involved in protein urmylation. This chain is Cytoplasmic tRNA 2-thiolation protein 1, found in Meyerozyma guilliermondii (strain ATCC 6260 / CBS 566 / DSM 6381 / JCM 1539 / NBRC 10279 / NRRL Y-324) (Yeast).